Reading from the N-terminus, the 571-residue chain is FAD-binding monooxygenase VdtE (571 aa).

Residues 44–47 (VWYW), 56–57 (DS), and Y62 contribute to the FAD site. 54-56 (RVD) contacts NADP(+). Residues 187-193 (TGASAVQ) and 210-211 (RT) contribute to the NADP(+) site.

It belongs to the FAD-binding monooxygenase family. The cofactor is FAD.

The catalysed reaction is 9,10-dihydroxy-7-methoxy-3-(2-oxopropyl)-1H-benzo[g]isochromen-1-one + NADPH + O2 + H(+) = methyl 2-[(3S)-9,10-dihydroxy-7-methoxy-1-oxo-1H,3H,4H-naphtho[2,3-c]pyran-3-yl]acetate + NADP(+) + H2O. It catalyses the reaction (3S)-9,10-dihydroxy-7-methoxy-3-(2-oxopropyl)-1H,3H,4H-naphtho[2,3-c]pyran-1-one + NADPH + O2 + H(+) = semiviriditoxin + NADP(+) + H2O. It participates in secondary metabolite biosynthesis. Its function is as follows. FAD-binding monooxygenase; part of the gene cluster that mediates the biosynthesis of viriditoxin, one of the 'classical' secondary metabolites produced by fungi and that has antibacterial activity. The first step is performed by the polyketide synthase VdtA which condenses one acetyl-CoA and 6 malonyl-CoA units to form the heptaketide monomer backbone of viriditoxin. The product of VdtA is then O-methylated on C7 by the O-methyltransferase VdtC. The O-methyl group is important for the stereoselective coupling of the monomers at the final step of viriditoxin biosynthesis. The short-chain dehydrogenase/reductase VdtF then acts as a stereospecific reductase converting the pyrone to dihydropyrone via the reduction of the C3-C4 double bond. The FAD-binding monooxygenase VdtE then converts the ketone group into a methyl-ester group to yield semi-viriditoxin. Finally, the laccase VdtB is involved in dimerization of 2 semi-viriditoxin molecules to yield the final viriditoxin. VdtB is responsible for the regioselective 6,6'-coupling of semi-viriditoxin, which yields (M)-viriditoxin and (P)-viriditoxin at a ratio of 1:2. The non-catalytic carboxylesterase-like protein VdtD affects the stereochemistical outcome of the coupling. The highly reducing polyketide synthase VdtX is not involved in viriditoxin synthesis, but might possibly play a role in the production of additional metabolites not identified yet. The protein is FAD-binding monooxygenase VdtE of Byssochlamys spectabilis (Paecilomyces variotii).